A 162-amino-acid polypeptide reads, in one-letter code: Caveolin-2 (162 aa).

Topologically, residues 1–86 (MGLETEKADV…FEISKYVMYK (86 aa)) are cytoplasmic. Tyrosine 19 carries the phosphotyrosine; by SRC modification. Serine 20 bears the Phosphoserine mark. Tyrosine 27 carries the post-translational modification Phosphotyrosine; by SRC. Serine 36 carries the post-translational modification Phosphoserine. An intramembrane region (helical) is located at residues 87 to 107 (FLTVFLAIPLAFAAGILFATL). Over 108–162 (SCLHIWIIMPFVKTCLMVLPSVQTIWKSVTDVIIAPLCTSVGRSLSSISLQLSHD) the chain is Cytoplasmic.

This sequence belongs to the caveolin family. As to quaternary structure, monomer or homodimer. Interacts with CAV1; the interaction forms a stable heterooligomeric complex that is required for targeting to lipid rafts and for caveolae formation. Tyrosine phosphorylated forms do not form heterooligomers with the Tyr-19-phosphorylated form existing as a monomer or dimer, and the Tyr-27-form as a monomer only. Interacts (tyrosine phosphorylated form) with the SH2 domain-containing proteins, RASA1, NCK1 and SRC. Interacts (tyrosine phosphorylated form) with INSR, the interaction (Tyr-27-phosphorylated form) is increased on insulin stimulation. Interacts (Tyr-19 phosphorylated form) with MAPK1 (phosphorylated form); the interaction, promoted by insulin, leads to nuclear location and MAPK1 activation. Interacts with STAT3; the interaction is increased on insulin-induced tyrosine phosphorylation leading to STAT activation. Post-translationally, phosphorylated on serine and tyrosine residues. Phosphorylation on Ser-36 appears to modulate mitosis in endothelial cells. Phosphorylation on both Tyr-19 and Tyr-27 is required for insulin-induced 'Ser-727' phosphorylation of STAT3 and its activation. Phosphorylation on Tyr-19 is required for insulin-induced phosphorylation of MAPK1 and DNA binding of STAT3. Tyrosine phosphorylation is induced by both EGF and insulin.

The protein resides in the nucleus. Its subcellular location is the cytoplasm. It localises to the golgi apparatus membrane. The protein localises to the cell membrane. It is found in the membrane. The protein resides in the caveola. Functionally, may act as a scaffolding protein within caveolar membranes. Interacts directly with G-protein alpha subunits and can functionally regulate their activity. Acts as an accessory protein in conjunction with CAV1 in targeting to lipid rafts and driving caveolae formation. The Ser-36 phosphorylated form has a role in modulating mitosis in endothelial cells. Positive regulator of cellular mitogenesis of the MAPK signaling pathway. Required for the insulin-stimulated nuclear translocation and activation of MAPK1 and STAT3, and the subsequent regulation of cell cycle progression. The polypeptide is Caveolin-2 (CAV2) (Eulemur macaco macaco (Black lemur)).